Here is a 171-residue protein sequence, read N- to C-terminus: Secreted thaumatin-like protein calA (171 aa).

The signal sequence occupies residues 1–18 (MLFNKIISLAATLATASA). N-linked (GlcNAc...) asparagine glycans are attached at residues Asn37 and Asn141. 2 disulfide bridges follow: Cys130–Cys157 and Cys135–Cys142.

This sequence belongs to the thaumatin family.

It is found in the secreted. Its subcellular location is the extracellular space. The protein localises to the extracellular matrix. It localises to the cell wall. Functionally, secreted thaumatin-like protein that, with cetA, plays an essential role in early conidial germination with a possible role in cell wall remodeling. The sequence is that of Secreted thaumatin-like protein calA from Emericella nidulans (strain FGSC A4 / ATCC 38163 / CBS 112.46 / NRRL 194 / M139) (Aspergillus nidulans).